Consider the following 201-residue polypeptide: B-cell CLL/lymphoma 7 protein family member B-B (201 aa).

Positions 104-201 (QSNTKVDSSS…VCTEHNSTVS (98 aa)) are disordered.

It belongs to the BCL7 family.

The sequence is that of B-cell CLL/lymphoma 7 protein family member B-B from Danio rerio (Zebrafish).